The chain runs to 434 residues: Protein FAM83A (434 aa).

The interval Met-1 to Gly-298 is DUF1669. Positions Arg-76–Ser-97 are disordered. Phosphoserine occurs at positions 301, 327, 348, and 357. The disordered stretch occupies residues Val-308–Ser-399. Low complexity-rich tracts occupy residues Ser-320–Ser-332 and Ser-348–Ser-357. Over residues Pro-358–Phe-369 the composition is skewed to pro residues.

This sequence belongs to the FAM83 family. Directly interacts (via DUF1669) with casein kinase isoforms CSNK1A1, CSNK1A1L, CSNK1D and CSNK1E. In terms of processing, phosphorylated upon EGFR activation in a breast cancer cell line.

The protein localises to the cytoplasm. Its function is as follows. Involved in mitochondrial maintenance during adipogenesis. May be acting by playing a role in the maintenance of normal mitochondrial function. This is Protein FAM83A from Homo sapiens (Human).